The chain runs to 202 residues: Peptidyl-tRNA hydrolase (202 aa).

Tyrosine 14 provides a ligand contact to tRNA. Histidine 19 (proton acceptor) is an active-site residue. TRNA-binding residues include tyrosine 64, asparagine 66, and asparagine 112.

The protein belongs to the PTH family. Monomer.

Its subcellular location is the cytoplasm. The enzyme catalyses an N-acyl-L-alpha-aminoacyl-tRNA + H2O = an N-acyl-L-amino acid + a tRNA + H(+). Its function is as follows. Hydrolyzes ribosome-free peptidyl-tRNAs (with 1 or more amino acids incorporated), which drop off the ribosome during protein synthesis, or as a result of ribosome stalling. Catalyzes the release of premature peptidyl moieties from peptidyl-tRNA molecules trapped in stalled 50S ribosomal subunits, and thus maintains levels of free tRNAs and 50S ribosomes. This chain is Peptidyl-tRNA hydrolase, found in Xanthobacter autotrophicus (strain ATCC BAA-1158 / Py2).